A 210-amino-acid chain; its full sequence is Chloramphenicol acetyltransferase (210 aa).

The active site involves H79.

This sequence belongs to the transferase hexapeptide repeat family.

The catalysed reaction is chloramphenicol + acetyl-CoA = chloramphenicol 3-acetate + CoA. In terms of biological role, this enzyme is an effector of chloramphenicol resistance in bacteria. The sequence is that of Chloramphenicol acetyltransferase (catB4) from Klebsiella aerogenes (Enterobacter aerogenes).